The sequence spans 123 residues: Glucose starvation-inducible protein B (123 aa).

Basic and acidic residues-rich tracts occupy residues 1–29 and 41–109; these read MADNNKMSREEAGRKGGETTSKNHDKEFY and SKNH…KEFY. Positions 1 to 123 are disordered; sequence MADNNKMSRE…SKGGNARNND (123 aa). 5 consecutive repeat copies span residues 13–32, 33–52, 53–72, 73–92, and 93–112. A 5 X 20 AA approximate tandem repeats region spans residues 13 to 120; the sequence is GRKGGETTSK…EIGSKGGNAR (108 aa).

In terms of biological role, involved in an adaptive response to nutrient deprivation other than sporulation. This is Glucose starvation-inducible protein B (gsiB) from Bacillus subtilis (strain 168).